Consider the following 141-residue polypeptide: Methylglyoxal synthase (141 aa).

The MGS-like domain maps to 1 to 141 (MNIALIAHDK…PKLQKNKSDK (141 aa)). Residues His-8, Lys-12, and 34–37 (TGTT) each bind substrate. Asp-60 functions as the Proton donor/acceptor in the catalytic mechanism. A substrate-binding site is contributed by His-87.

Belongs to the methylglyoxal synthase family.

It catalyses the reaction dihydroxyacetone phosphate = methylglyoxal + phosphate. Its function is as follows. Catalyzes the formation of methylglyoxal from dihydroxyacetone phosphate. The chain is Methylglyoxal synthase from Caldicellulosiruptor bescii (strain ATCC BAA-1888 / DSM 6725 / KCTC 15123 / Z-1320) (Anaerocellum thermophilum).